Consider the following 187-residue polypeptide: Putative AgrB-like protein 1 (187 aa).

A run of 5 helical transmembrane segments spans residues 29–49 (VVIV…IAGI), 50–70 (LGYF…KPFI), 81–98 (CFIA…LVTF), 103–120 (LFSI…IYNK), and 149–169 (ILFL…TITW).

It belongs to the AgrB family.

The protein resides in the cell membrane. Its function is as follows. May be involved in the proteolytic processing of a quorum sensing system signal molecule precursor. The sequence is that of Putative AgrB-like protein 1 from Clostridium perfringens (strain 13 / Type A).